Reading from the N-terminus, the 259-residue chain is Protein YIF1B (259 aa).

M1 carries the N-acetylmethionine modification. The segment at M1–P61 is disordered. The Cytoplasmic portion of the chain corresponds to P9 to D153. Position 12 is a phosphothreonine (T12). Basic residues predominate over residues R14–V24. S64 is subject to Phosphoserine. Residues L154 to T174 form a helical membrane-spanning segment. Over Q175–L186 the chain is Extracellular. A helical transmembrane segment spans residues L187–F207. Over M208–Y237 the chain is Cytoplasmic. A helical transmembrane segment spans residues L238 to V258. R259 is a topological domain (extracellular).

It belongs to the YIF1 family. As to quaternary structure, interacts with HTR1A (via C-terminus). Interacts with ABCB9 (via TMD0); this interaction allows (but is not essential) the ER-to-Golgi trafficking and strongly depends on a salt bridge within TMD0. In terms of tissue distribution, highly expressed in brain. Expressed in heart, kidney, and lung and lower levels in spleen, muscle, and intestine (at protein level). Expressed in serotoninergic neurons (at protein level).

The protein localises to the endoplasmic reticulum membrane. Its subcellular location is the golgi apparatus membrane. It is found in the endoplasmic reticulum-Golgi intermediate compartment membrane. Functions in endoplasmic reticulum to Golgi vesicle-mediated transport and regulates the proper organization of the endoplasmic reticulum and the Golgi. Plays a key role in targeting to neuronal dendrites receptors such as HTR1A. Plays also a role in primary cilium and sperm flagellum assembly probably through protein transport to these compartments. In Rattus norvegicus (Rat), this protein is Protein YIF1B.